The following is a 553-amino-acid chain: Heterochromatin protein 1-binding protein 3 (553 aa).

The residue at position 2 (Ala2) is an N-acetylalanine. Ser6 carries the phosphoserine modification. The tract at residues 30–131 is disordered; sequence LGEKADDSTM…SKEKEKKVKK (102 aa). Residue Thr51 is modified to Phosphothreonine. Acidic residues predominate over residues 60–71; sequence GEEEKPEPDGSS. Residue Lys64 forms a Glycyl lysine isopeptide (Lys-Gly) (interchain with G-Cter in SUMO2) linkage. Residue Thr85 is modified to Phosphothreonine. Residues 91-127 are compositionally biased toward basic and acidic residues; that stretch reads REAEQPKGEPESGEKEESKSAEETKKEEKDQSKEKEK. Lys97 is covalently cross-linked (Glycyl lysine isopeptide (Lys-Gly) (interchain with G-Cter in SUMO2)). Phosphoserine occurs at positions 142, 155, and 156. The H15 1 domain occupies 157 to 232; that stretch reads PRPKMDAILT…GASGSFVVVQ (76 aa). N6-acetyllysine is present on Lys190. The segment at 231–251 is disordered; sequence VQKSKTPQKSKNRKKGSAVDP. Basic residues predominate over residues 236 to 246; it reads TPQKSKNRKKG. The residue at position 247 (Ser247) is a Phosphoserine. The short motif at 253-257 is the PxVxL motif element; that stretch reads PQVKL. 2 H15 domains span residues 253 to 328 and 335 to 411; these read PQVK…QLKK and LGGS…QLCF. Lys256 participates in a covalent cross-link: Glycyl lysine isopeptide (Lys-Gly) (interchain with G-Cter in SUMO2). Residues 422-553 are disordered; it reads PKKVSDGSED…MKKKSFKTKK (132 aa). Residues 428 to 449 are compositionally biased toward acidic residues; it reads GSEDEDEEEDEEESSEDSEDEE. Phosphoserine is present on residues Ser441, Ser442, and Ser445. Basic residues-rich tracts occupy residues 488–509 and 542–553; these read GKVRPLPKKAPPKAKTPARKGR and SAMKKKSFKTKK.

Interacts (via PxVxL motif) with CBX5.

It is found in the nucleus. The protein resides in the chromosome. Its function is as follows. Component of heterochromatin that maintains heterochromatin integrity during G1/S progression and regulates the duration of G1 phase to critically influence cell proliferative capacity. May play a role in hypoxia-induced oncogenesis. This Rattus norvegicus (Rat) protein is Heterochromatin protein 1-binding protein 3 (Hp1bp3).